We begin with the raw amino-acid sequence, 381 residues long: Pentatricopeptide repeat-containing protein 2, mitochondrial (381 aa).

A PPR repeat occupies 157–191 (DTTSFNITIDMLFNKQLYESGLEVVGEMKKQGVSL).

It belongs to the PTCD2 family.

The protein resides in the mitochondrion. Involved in mitochondrial RNA maturation and mitochondrial respiratory chain function. The sequence is that of Pentatricopeptide repeat-containing protein 2, mitochondrial (ptcd2) from Danio rerio (Zebrafish).